A 313-amino-acid chain; its full sequence is 4-diphosphocytidyl-2-C-methyl-D-erythritol kinase (313 aa).

The active site involves lysine 10. ATP is bound at residue proline 95–serine 105. Aspartate 136 is an active-site residue. The interval histidine 289–threonine 313 is disordered. Over residues valine 292 to arginine 304 the composition is skewed to low complexity.

The protein belongs to the GHMP kinase family. IspE subfamily.

It catalyses the reaction 4-CDP-2-C-methyl-D-erythritol + ATP = 4-CDP-2-C-methyl-D-erythritol 2-phosphate + ADP + H(+). Its pathway is isoprenoid biosynthesis; isopentenyl diphosphate biosynthesis via DXP pathway; isopentenyl diphosphate from 1-deoxy-D-xylulose 5-phosphate: step 3/6. In terms of biological role, catalyzes the phosphorylation of the position 2 hydroxy group of 4-diphosphocytidyl-2C-methyl-D-erythritol. This is 4-diphosphocytidyl-2-C-methyl-D-erythritol kinase from Anaeromyxobacter sp. (strain K).